A 454-amino-acid chain; its full sequence is UPF0210 protein Mlab_1030 (454 aa).

Belongs to the UPF0210 family.

The chain is UPF0210 protein Mlab_1030 from Methanocorpusculum labreanum (strain ATCC 43576 / DSM 4855 / Z).